Consider the following 3101-residue polypeptide: Probable polyketide synthase 32 (3101 aa).

The 439-residue stretch at 27 to 465 folds into the Ketosynthase family 3 (KS3) domain; the sequence is SGDVAVIGIG…GSNVCLILSE (439 aa). Catalysis depends on for beta-ketoacyl synthase activity residues Cys199, His338, and His388. An acyl/malonyl transferase region spans residues 664–697; sequence GVSADIIIGHSLGEVSSAYCSGMIDFETLCYLTY. Residue Ser674 is the For acyl/malonyl transferase activity of the active site. Positions 965–1087 are N-terminal hotdog fold; sequence GPSINNLGNN…GNFSLTKHNS (123 aa). The 323-residue stretch at 965–1287 folds into the PKS/mFAS DH domain; that stretch reads GPSINNLGNN…CTLVSLPNPE (323 aa). His999 acts as the Proton acceptor; for dehydratase activity in catalysis. The interval 1104–1287 is C-terminal hotdog fold; the sequence is NFTSISKQDL…CTLVSLPNPE (184 aa). Asp1176 (proton donor; for dehydratase activity) is an active-site residue. Positions 1209-1236 are disordered; the sequence is KNGNNNDDDEESNNNNNNNNNNNNNNNN. The span at 1221–1236 shows a compositional bias: low complexity; sequence NNNNNNNNNNNNNNNN. Positions 2550–2627 constitute a Carrier domain; the sequence is DNNEIIRSTI…QSIEIIKSAN (78 aa). The residue at position 2587 (Ser2587) is an O-(pantetheine 4'-phosphoryl)serine. The interval 2627 to 2648 is disordered; that stretch reads NNKNNKNNNNNNNNKTNKNNNN.

Requires pantetheine 4'-phosphate as cofactor.

Probable polyketide synthase. This is Probable polyketide synthase 32 (pks32) from Dictyostelium discoideum (Social amoeba).